A 217-amino-acid chain; its full sequence is UPF0502 protein Sfri_1696 (217 aa).

Belongs to the UPF0502 family.

The protein is UPF0502 protein Sfri_1696 of Shewanella frigidimarina (strain NCIMB 400).